Consider the following 820-residue polypeptide: Leucine-rich repeat and guanylate kinase domain-containing protein (820 aa).

Over residues 72 to 83 the composition is skewed to basic and acidic residues; the sequence is EAEAEQEEKQQE. The tract at residues 72–96 is disordered; it reads EAEAEQEEKQQEDGESEESEESEMQ. Residues 84–94 show a composition bias toward acidic residues; it reads DGESEESEESE. LRR repeat units lie at residues 129-149, 150-171, 172-193, 194-215, 216-237, 238-259, 260-280, 281-302, and 303-324; these read YLNL…CGYV, HLQK…SCMP, YLLE…KPPQ, NLKK…SAYH, TLTQ…ENCI, SLTH…GTLP, IKVL…EELK, ALQN…ENHD, and LLEV…EYIE. One can recognise an LRRCT domain in the interval 337–375; it reads NPIQTKPEYWFFVIYMLLRLTELDQQKIKVEEKVFAVNK. In terms of domain architecture, Guanylate kinase-like spans 414-597; the sequence is YPMLILTGPA…AYQKLSELIR (184 aa). 421–428 contributes to the ATP binding site; the sequence is GPAACGKR. Residues 800–820 form a disordered region; that stretch reads TIMDPGSNTKPTLPPIPHGRR. Positions 811 to 820 are enriched in pro residues; the sequence is TLPPIPHGRR.

Interacts (via guanylate kinase-like domain) with RIMBP3 (via coiled-coil region). Interacts (via guanylate kinase-like domain) with HOOK2. Interacts (via LRRCT domain) with KLC3. Interacts with HOOK1 and HOOK3. In terms of tissue distribution, highly expressed in the testis. During spermatid development is initially localized to a supra-nuclear region of round spermatids, and is particularly evident at the leading edge of the developing acrosome and acroplaxome. As maturation proceeded and nuclear elongation initiated, LRGUK moves distally to ultimately reside on the microtubules of the manchette. LRGUK is also evident in the sperm basal body and the sperm tail.

It localises to the cytoplasmic vesicle. The protein localises to the secretory vesicle. It is found in the acrosome. Its subcellular location is the cytoplasm. The protein resides in the cytoskeleton. It localises to the cilium basal body. Involved in multiple aspects of sperm assembly including acrosome attachment, shaping of the sperm head and in the early aspects of axoneme development. Not essential for primary cilium biogenesis. In Mus musculus (Mouse), this protein is Leucine-rich repeat and guanylate kinase domain-containing protein (Lrguk).